We begin with the raw amino-acid sequence, 441 residues long: MKTKTLFIFSAILTLSIFAPNETFAQTAGNLIEPKIINAETAQFSTKKLRKVDQMIERDIAAGFPGAVLVVVKDGRIIKKAAYGYSKKYEGSELLRRPAKMKTRTMFDLASNTKMYATNFALQRLVSQGKLDVYEKVSAYLPGFKDQPGDLIKGKDKIRVIDVLQHQSGLPSSFYFYTPEKAGKYYSQERDKTIEYLTKIPLDYQTGTKHVYSDIGYMLLGCIVEKLTGKPLDVYTEQELYKPLRLKHTLYNPLQKGFKPKQFAATERMGNTRDGVIQFPNIRTNTLQGEVHDEKAFYSMDGVSGHAGLFSNADDMAILLQVMLNKGSYRNISLFDQKTADLFTAPSATDPTFALGWRRNGSKSMEWMFGPHASENAYGHTGWTGTVTIIDPAYNLGIALLTNKKHTPVIDPEENPNVFEGDQFPTGSYGSVITAIYEAME.

Residues 1–25 form the signal peptide; it reads MKTKTLFIFSAILTLSIFAPNETFA.

The protein belongs to the peptidase S12 family.

It carries out the reaction Hydrolyzes the link between N-acetylmuramoyl residues and L-amino acid residues in certain cell-wall glycopeptides.. It participates in cell wall biogenesis; peptidoglycan recycling. In terms of biological role, involved in muropeptide recycling. Hydrolyzes the amide bond between N-acetylmuramic acid (MurNAc) and the L-alanine residue of the stem peptide. Cannot hydrolyze muropeptides containing N-acetylglucosamine (GlcNAc) at the non-reducing end. The polypeptide is N-acetylmuramyl-L-alanine amidase (Bacillus subtilis (strain 168)).